Here is a 1088-residue protein sequence, read N- to C-terminus: RNA-directed RNA polymerase (1088 aa).

One can recognise a RdRp catalytic domain in the interval 501-687 (LSYGDVTRFL…AKRYIAGGKI (187 aa)).

The protein belongs to the reoviridae RNA-directed RNA polymerase family. In terms of assembly, interacts with VP3 (Potential). Interacts with VP2; this interaction activates VP1. Interacts with NSP5; this interaction is probably necessary for the formation of functional virus factories. Interacts with NSP2; this interaction is weak. Mg(2+) serves as cofactor.

Its subcellular location is the virion. It carries out the reaction RNA(n) + a ribonucleoside 5'-triphosphate = RNA(n+1) + diphosphate. Functionally, RNA-directed RNA polymerase that is involved in both transcription and genome replication. Together with VP3 capping enzyme, forms an enzyme complex positioned near the channels situated at each of the five-fold vertices of the core. Following infection, the outermost layer of the virus is lost, leaving a double-layered particle (DLP) made up of the core and VP6 shell. VP1 then catalyzes the transcription of fully conservative plus-strand genomic RNAs that are extruded through the DLP's channels into the cytoplasm where they function as mRNAs for translation of viral proteins. One copy of each of the viral (+)RNAs is also recruited during core assembly, together with newly synthesized polymerase complexes and VP2. The polymerase of these novo-formed particles catalyzes the synthesis of complementary minus-strands leading to dsRNA formation. To do so, the polymerase specifically recognizes and binds 4 bases 5'-UGUG-3' in the conserved 3'-sequence of plus-strand RNA templates. VP2 presumably activates the autoinhibited VP1-RNA complex to coordinate packaging and genome replication. Once dsRNA synthesis is complete, the polymerase switches to the transcriptional mode, thus providing secondary transcription. This is RNA-directed RNA polymerase from Bos taurus (Bovine).